The following is a 156-amino-acid chain: Phospholipase A2 A2-hormotoxin-Apt1a (156 aa).

An N-terminal signal peptide occupies residues 1–19; the sequence is MQLYTYFFTFSLVLILALA. The propeptide occupies 20–35; the sequence is DQENKSLDFTQEGGIA. 5 disulfide bridges follow: Cys62–Cys156, Cys64–Cys80, Cys79–Cys138, Cys86–Cys131, and Cys115–Cys129. 2 residues coordinate Ca(2+): Gly65 and Gly67. His83 is an active-site residue. Asp84 provides a ligand contact to Ca(2+). Residue Asp132 is part of the active site.

It belongs to the phospholipase A2 family. Requires Ca(2+) as cofactor.

The protein resides in the secreted. It is found in the nematocyst. The enzyme catalyses a 1,2-diacyl-sn-glycero-3-phosphocholine + H2O = a 1-acyl-sn-glycero-3-phosphocholine + a fatty acid + H(+). Its function is as follows. Sea anemone phospholipase A2 (PLA2) that may have a role both in defense and in digestion, since its expression and enzymatic activity were found both in the acontia (defensive organs) and tentacles. PLA2 catalyzes the calcium-dependent hydrolysis of the 2-acyl groups in 3-sn-phosphoglycerides. In Adamsia palliata (Cloak anemone), this protein is Phospholipase A2 A2-hormotoxin-Apt1a.